Here is a 119-residue protein sequence, read N- to C-terminus: Protein GSKIP homolog (119 aa).

It belongs to the GSKIP family.

This chain is Protein GSKIP homolog, found in Drosophila melanogaster (Fruit fly).